Consider the following 463-residue polypeptide: Nucleobindin-1 (463 aa).

The N-terminal stretch at Met-1–Ala-26 is a signal peptide. Position 86 is a phosphoserine (Ser-86). Thr-148 is modified (phosphothreonine). The stretch at Glu-150–Lys-218 forms a coiled coil. Residues His-172–Lys-218 mediate DNA binding. Positions Ser-193 to Gln-210 are enriched in basic and acidic residues. The segment at Ser-193–Val-221 is disordered. The segment at Leu-228–Thr-321 is binds to GNAI2 and GNAI3. EF-hand domains follow at residues Pro-240–Lys-275 and Glu-292–Gly-327. Positions 253, 255, 257, 264, 305, 307, 309, and 316 each coordinate Ca(2+). Positions Asn-303 to Trp-333 match the GBA motif. A coiled-coil region spans residues Ala-341 to Gln-409. The segment at Leu-368–Leu-463 is disordered. Ser-369 bears the Phosphoserine mark. Basic and acidic residues predominate over residues Asp-439 to Leu-463.

Belongs to the nucleobindin family. Interacts (via GBA motif) with guanine nucleotide-binding protein G(i) alpha subunits GNAI1, GNAI2 and GNAI3 with higher affinity for GNAI1 and GNAI3 than for GNAI2. Preferentially interacts with inactive rather than active GNAI3. Interaction with GNAI3 is inhibited when NUCB1 binds calcium, probably due to a conformational change which renders the GBA motif inaccessible.

It localises to the golgi apparatus. Its subcellular location is the cis-Golgi network membrane. It is found in the cytoplasm. The protein resides in the secreted. In terms of biological role, major calcium-binding protein of the Golgi which may have a role in calcium homeostasis. Acts as a non-receptor guanine nucleotide exchange factor which binds to and activates alpha subunits of guanine nucleotide-binding proteins (G proteins). The protein is Nucleobindin-1 (NUCB1) of Pongo abelii (Sumatran orangutan).